A 184-amino-acid polypeptide reads, in one-letter code: Flavodoxin FldP (184 aa).

The Flavodoxin-like domain maps to 4-176; that stretch reads AVVVYFSGYG…TVKLYAARVA (173 aa). FMN is bound by residues 10–14 and 91–147; these read SGYGH and GFTN…SVGA.

Belongs to the FldP flavodoxin family. FMN is required as a cofactor.

Functionally, flavodoxins are low-potential electron donors to a number of redox enzymes. FldP protects the cell from oxidative stress and reactive oxygen species (ROS) damage, thereby expanding the capabilities of P.aeruginosa to thrive in hostile environments, and contributes to bacterial survival within the host. In vitro, is able to mediate ferredoxin-NADP(H) reductase (FNR)-driven cytochrome c reduction. This Pseudomonas aeruginosa (strain UCBPP-PA14) protein is Flavodoxin FldP.